Consider the following 518-residue polypeptide: Bifunctional purine biosynthesis protein PurH (518 aa).

Residues 1–146 (MSPIALLSVS…KNHQDVLVVT (146 aa)) enclose the MGS-like domain.

It belongs to the PurH family.

It carries out the reaction (6R)-10-formyltetrahydrofolate + 5-amino-1-(5-phospho-beta-D-ribosyl)imidazole-4-carboxamide = 5-formamido-1-(5-phospho-D-ribosyl)imidazole-4-carboxamide + (6S)-5,6,7,8-tetrahydrofolate. The catalysed reaction is IMP + H2O = 5-formamido-1-(5-phospho-D-ribosyl)imidazole-4-carboxamide. It participates in purine metabolism; IMP biosynthesis via de novo pathway; 5-formamido-1-(5-phospho-D-ribosyl)imidazole-4-carboxamide from 5-amino-1-(5-phospho-D-ribosyl)imidazole-4-carboxamide (10-formyl THF route): step 1/1. Its pathway is purine metabolism; IMP biosynthesis via de novo pathway; IMP from 5-formamido-1-(5-phospho-D-ribosyl)imidazole-4-carboxamide: step 1/1. The protein is Bifunctional purine biosynthesis protein PurH of Prochlorococcus marinus (strain NATL2A).